Here is a 255-residue protein sequence, read N- to C-terminus: tRNA (guanine-N(7)-)-methyltransferase (255 aa).

S-adenosyl-L-methionine is bound by residues E86, E111, D138, and D161. Residue D161 is part of the active site. Residues K165, D197, and 234 to 237 (TKFE) each bind substrate.

The protein belongs to the class I-like SAM-binding methyltransferase superfamily. TrmB family.

It catalyses the reaction guanosine(46) in tRNA + S-adenosyl-L-methionine = N(7)-methylguanosine(46) in tRNA + S-adenosyl-L-homocysteine. It participates in tRNA modification; N(7)-methylguanine-tRNA biosynthesis. Catalyzes the formation of N(7)-methylguanine at position 46 (m7G46) in tRNA. In Pasteurella multocida (strain Pm70), this protein is tRNA (guanine-N(7)-)-methyltransferase.